Consider the following 113-residue polypeptide: Chaperone protein SigE (113 aa).

The protein belongs to the IpgE/SigE chaperone family. Homodimer or higher-order oligomers.

Its subcellular location is the cytoplasm. Molecular chaperone required for SopB/SigD stabilization and secretion. This chain is Chaperone protein SigE (sigE), found in Salmonella paratyphi A (strain ATCC 9150 / SARB42).